An 85-amino-acid polypeptide reads, in one-letter code: Large ribosomal subunit protein bL27 (85 aa).

Residues 1-11 (MASKASGGSTR) are compositionally biased toward polar residues. Residues 1–20 (MASKASGGSTRNGRDSISKR) form a disordered region.

Belongs to the bacterial ribosomal protein bL27 family.

This is Large ribosomal subunit protein bL27 from Sulfurihydrogenibium sp. (strain YO3AOP1).